The following is a 914-amino-acid chain: Serine/threonine kinase SAD-1 (914 aa).

The Protein kinase domain occupies 47–298; it reads YKLEKTLGKG…LADVFKHPWV (252 aa). ATP contacts are provided by residues 53–61 and Lys-76; that span reads LGKGQTGLV. Catalysis depends on Asp-169, which acts as the Proton acceptor. 3 disordered regions span residues 375-551, 563-590, and 757-914; these read AQED…SPPS, TMNS…SGPW, and NSTQ…ADKV. A compositionally biased stretch (basic and acidic residues) spans 393-402; it reads PPKKRTDSSR. Over residues 444 to 462 the composition is skewed to low complexity; the sequence is RSSTRDLFGSSSSGSYSAR. The span at 473–482 shows a compositional bias: polar residues; the sequence is ASRSTNSYHY. Basic and acidic residues predominate over residues 495–526; sequence AARHVRDAQERRESRDSGRGSSRKESKDRSDK. Composition is skewed to low complexity over residues 527–551 and 563–573; these read SASS…SPPS and TMNSTNSSTNS. Polar residues predominate over residues 574–590; the sequence is LIAGNSQTSIGSTSGPW. A compositionally biased stretch (low complexity) spans 780–796; sequence DSSVGSACSDSESNASS. Polar residues predominate over residues 823–837; sequence SMRSVGSGTANSYKS. Positions 850–876 are enriched in low complexity; the sequence is ASSSSASNRYGPSSSSSGSYSNNADYS. Residues 882–903 are compositionally biased toward polar residues; the sequence is SQRSNGSSAPKNQYSPGSQRSF.

This sequence belongs to the protein kinase superfamily. CAMK Ser/Thr protein kinase family. SNF1 subfamily. Interacts with strd-1 and nab-1. Mg(2+) is required as a cofactor. Expressed in neurons. Colocalizes with strd-1 along the dorsal nerve cord.

The protein resides in the synapse. The catalysed reaction is L-seryl-[protein] + ATP = O-phospho-L-seryl-[protein] + ADP + H(+). The enzyme catalyses L-threonyl-[protein] + ATP = O-phospho-L-threonyl-[protein] + ADP + H(+). In terms of biological role, regulates both neuronal polarity and synaptic organization when bound to strd-1. Kinase activity is required for the establishment, but not the maintenance, of both processes. Binding to nab-1 is essential for role in restricting axonal fate during neuronal polarization but is not required for regulating synapse morphology. The protein is Serine/threonine kinase SAD-1 of Caenorhabditis elegans.